The sequence spans 150 residues: Flagellar assembly factor FliW (150 aa).

This sequence belongs to the FliW family. Interacts with translational regulator CsrA and flagellin(s).

Its subcellular location is the cytoplasm. Acts as an anti-CsrA protein, binds CsrA and prevents it from repressing translation of its target genes, one of which is flagellin. Binds to flagellin and participates in the assembly of the flagellum. This Leptospira interrogans serogroup Icterohaemorrhagiae serovar Lai (strain 56601) protein is Flagellar assembly factor FliW.